The primary structure comprises 352 residues: Phosphoribosylformylglycinamidine cyclo-ligase (352 aa).

It belongs to the AIR synthase family.

The protein resides in the cytoplasm. The catalysed reaction is 2-formamido-N(1)-(5-O-phospho-beta-D-ribosyl)acetamidine + ATP = 5-amino-1-(5-phospho-beta-D-ribosyl)imidazole + ADP + phosphate + H(+). It functions in the pathway purine metabolism; IMP biosynthesis via de novo pathway; 5-amino-1-(5-phospho-D-ribosyl)imidazole from N(2)-formyl-N(1)-(5-phospho-D-ribosyl)glycinamide: step 2/2. The polypeptide is Phosphoribosylformylglycinamidine cyclo-ligase (Pseudomonas entomophila (strain L48)).